The following is a 240-amino-acid chain: Probable transcriptional regulatory protein Nmul_A2722 (240 aa).

The protein belongs to the TACO1 family.

The protein resides in the cytoplasm. The chain is Probable transcriptional regulatory protein Nmul_A2722 from Nitrosospira multiformis (strain ATCC 25196 / NCIMB 11849 / C 71).